A 476-amino-acid polypeptide reads, in one-letter code: UDP-N-acetylmuramate--L-alanine ligase (476 aa).

Residue 121–127 (GAHGKTT) participates in ATP binding.

Belongs to the MurCDEF family.

The protein localises to the cytoplasm. The catalysed reaction is UDP-N-acetyl-alpha-D-muramate + L-alanine + ATP = UDP-N-acetyl-alpha-D-muramoyl-L-alanine + ADP + phosphate + H(+). Its pathway is cell wall biogenesis; peptidoglycan biosynthesis. Its function is as follows. Cell wall formation. The polypeptide is UDP-N-acetylmuramate--L-alanine ligase (Clavibacter sepedonicus (Clavibacter michiganensis subsp. sepedonicus)).